A 266-amino-acid polypeptide reads, in one-letter code: MPQVTMRQMLEAGVHFGHQTRYRHPKMSPNIFGARGKIHIINLEKTVPLFNDAMNFLSAVAQKRGSVLFVGTKRSARDAIKEEAERCGMPYMIQRWLGGTLTNFRTVKQSVARLKELELAETDGTFSKLVKHEVLRLRRESGKLQASLGGIKDMNRIPDAIFVIDIGHEDIAIKEAKKLGIPVVAVVDTNYDPSLVDYPIPGNDDAIRAVQLYARAAADAVLEGKAAMPNAAAVREEEFASAPDAGKKGRQAQPKKGKRASDAAAE.

Residues 233–266 (AVREEEFASAPDAGKKGRQAQPKKGKRASDAAAE) are disordered. The span at 248 to 258 (KGRQAQPKKGK) shows a compositional bias: basic residues.

This sequence belongs to the universal ribosomal protein uS2 family.

The protein is Small ribosomal subunit protein uS2 of Xylella fastidiosa (strain M23).